A 3326-amino-acid chain; its full sequence is MVKRKSSEGQEQDGGRGIPLPIQTFLWRQTSAFLRPKLGKQYEASCVSFERVLVENKLHGLSPALSEAIQSISRWELVQAALPHVLHCTATLLSNRNKLGHQDKLGVAETKLLHTLHWMLLEAPQDCNNDQFGGTDRGSSWGGSSSAFIHQIENQGSPGQPCRSSSHDEEENNRRKTFQNSMATVELFVFLFAPLVHRIKESDLTFRLASGLVIWQPMWEHRQPEVSGFTALVKPIRNIITAKRSSPINSQSQTCESPNQDTRQQGEGLQVVSEALQSDSISPKATISGCHQGNSFDGSLSSQTSQERGPSHSRASLVIPPCQRSRYATYFDVAVLRCLLQPHWSEEGTQWSLMYYLQRLRHMLEEKPEKTPDPDIPLLPRPRSSSMVAAAPSLVNTHKTQDLTMKCNEEEKSLSPEAFSKVSLTNLRRSAVPDLSSDLGMNIFKKFKSRKEDRERKGSIPFHHTGKRRPRRMGVPFLLHEDHLDVSPTRSTFSFGSFSGLGEDRRGIEKGGWQTTILGKLTRRGSSDAATEMESLSARHSHSHHTLVSDLPDHSNSHGENTVKEVRSQISTITVATFNTTLASFNVGYADFFSEHMRKLCSQVPIPEMPHEPLACANLPRSLTDSCINYSYLEDTEHIDGTNNFVHKNGMLDLSVVLKAVYLVLNHDISSRICDVALNIVECLLQLGVVPCVEKNRKKSENKENESVEKRPSEGAFQFKGVSSSSTSGFGAPSASGAGDGGGEEGGGGDGGGGGGGGDGGGGGGGGGGPYEKNEKNQEKDDNIPVSNHRLALTMLIKIVKSLGCAYGCGEGHRGLSGDRLRHQVFRENAQNCLTKLYKLDKIQFRQTMRDYVNKDSLNNVVDFLHALLGFCMEPVTDNKAGFGNNFTTVDNKSTAQNVEGIIVGAMFKSLITRCASTTHELHSPENLGLYCDIRQLVQFIKEAHGNVFRRVALSALLDSAEKLAPGKKVEENGQESKPVGSKRSEAGSIADKGQVSSAPEECRSFMSGRPSQTPEHDEPMQGGNLGRKDFWRKMFKSQSAASDTSSQSEQDTSECTTAHSGNTSDRRARSRSRRISLRKKLKLPIGNWLKRSSLSGLADGVEDLLDISSVDRLSFIRQSSKVKFTSAVKLSEGGPGSGMENGREEEENFFKRLGCHSFDDHLSPNQDGGKSKNVVNLGAIRQGMKRFQFLLNCCEPGTIPDASILAAALDLEAPVVARAALFLECARFVHRCNRGNWPEWMKGHHVNITKKGLSRGRSPTVGNKRNQKLQWSAAKLFYQWGDAIGIRLNELCHGESESPANLLGLIYDEETKRRLRKEDEEEDFLDDSTVNPSKCGCPFALKMAACQLLLEITTFLRETFSCLPRPRTEPLVDLESCRLRLDPELDRHRYERKISFAGVLDENEDSKDSLHSSSHTIKSDAGAEEKKVPSRKIRIGGSRLLQIKGTRSFQVKKGGSLSSIRRVGSLKSSKLSRQDSESEAEELQLSQSRDTVTDLEGSPWSASEPSIEPEGLSNAGTEENYHRNMSWLHVMILLCNQQSFICTHVDYCHPHCYLHHSRSCARLVRAIKLLYGDSVDSLRESNHISNVALRGKKQKECSDKSCLRTPSLKKRVSDVNLEGKKDSGMLKYIRFQVMSLSPAPLSLLIKAAPILTEEMYGDIQPAAWELLLSMDEHMAGAAAAMFLLCAVKVPDAVSDMLMSEFHHAETVQRLNAVLKFHTLWRFRYQVWPRMEEGAQQIFKIPPPSINFTLPSPVLGMPSVPMFDPPWVPQCSGSVQDPINEDQSKSFSARAVSRSHQRAEHILKNLQQEEEKKRLGREASLITAIPITQEACYEPTCTPNSEPEEEEEVANLTSRRLSVSPSCTSSTSHRNYSFRRGSVWSVRSAVSAEDEEHATEHTPNHHVPQPPQAVFPACICAAVLPIVHLMEDGEVREDGVAVSAVAQQVLWNCLIEDPSTVLRHFLEKLTISNRQDELMYMLRKLLLNIGDFPAQTSHILFNYLVGLIMYFVRTPCEWGMDAISATLTFLWEVVGYVEGLFFKDLKQTMKKEQCEVKLLVTASMPGTKTLVVHGQNECDIPTQLPVHEDTQFEALLKECLEFFNIPESQSTHYFLMDKRWNLIHYNKTYVRDIYPFRRSVSPQLNLVHMHPEKGQELIQKQVFTRKLEEVGRVLFLISLTQKIPTAHKQSHVSMLQEDLLRLPSFPRSAIDAEFSLFSDPQAGKELFGLDTLQKSLWIQLLEEMFLGMPSEFPWGDEIMLFLNVFNGALILHPEDSALLRQYAATVINTAVHFNHLFSLSGYQWILPTMLQVYSDYESNPQLRRAIEFACHQFYILHRKPFVLQLFASVAPLLEFPDAANTGSSKGVSAQCLFDLLQSLEGETTDILDILELVKAEKPLKSLDFCYGNEDLTFSISEAIKLCVTVVAYAPESFRSLQMLMVLEALVPCYLQKMKRQTSQVETVPAAREEIAATAALATSLQALLYSVEVLTRPMTAPQMSRSDQGHKGTTTANHTMSSGVNTRYPEQGAKLHFIRENLHLLEEGQGLPREELDERISREEFRRPRESLLNICTEFYKHCGPRLKILQNLAGEPRVTALELLDVKSHMRLAEIAHSLLKLAPYDTQTMESRGLRRYIMEMLPITDWSAEAVRPALILILKRLDRMFNKIHKMPTLRRQVEWEPASSLIEGVCLTLQRQPIISFLPHLRSLINVCVNLVMGVVGPSSVADGLPLLHLSPYLSPPLPFSTAVVRLVALQIQALKEDFPLSHVISPFTNQERREGMLLNLLIPFVLTVGSGSKDSPWLEQPEVQLLLQTVINVLLPPRIISTSRSKNFMLESSPAHCSTPGDAGKDLRKEGLAESTSQAAYLALKVILVCFERQLGSQWYWLSLQVKEMALRKVGGLALWDFLDFIVRTRIPIFVLLRPFIQCKLLAQPAENHEELSARQHISDQLERRFIPRPLCKSSLIAEFNSELKILKEAVHSGSAYQGKTSISTVGTSTSAYRLSLATMSRSNTGTGTVWEQDSEPSQQASQDTLSRTDEEDEENDSVSMPSVVSEQEACLLSTIGRRRFSSHVSSMSAPQAEVGMLPSQSEPNVLDDSQGLAAEGSLSRVASIQSEPGQQNVLLQQPLGRKRGLRQLRRPLLSRQKTQTEPRNRHGARLSTTRRSIQPKTKPSVDQKRSVTFIEAQPEPTAAPTDIFPATGQPQSCSPGRARKPEGTEKPVLTSSPAIIIADLHSLSPKQSEPLLAEEGEKKEDEEIQGATAHCPLSTQLSDPDDFTGLETSSLLQHGDTVLHISEENGTENPLLSSQFTFTPPELGDTDSALDESHV.

Positions 152 to 164 (IENQGSPGQPCRS) are enriched in polar residues. Disordered stretches follow at residues 152 to 178 (IENQGSPGQPCRSSSHDEEENNRRKTF), 243 to 267 (KRSSPINSQSQTCESPNQDTRQQGE), 283 to 317 (PKATISGCHQGNSFDGSLSSQTSQERGPSHSRASL), and 450 to 469 (RKEDRERKGSIPFHHTGKRR). Serine 257 is subject to Phosphoserine. Positions 283-308 (PKATISGCHQGNSFDGSLSSQTSQER) are enriched in polar residues. A Phosphoserine modification is found at serine 526. 5 disordered regions span residues 536–560 (LSARHSHSHHTLVSDLPDHSNSHGE), 697–785 (RKKS…DNIP), 967–1076 (GKKV…SRRI), 1405–1430 (EDSKDSLHSSSHTIKSDAGAEEKKVP), and 1469–1516 (SSKL…LSNA). Basic and acidic residues-rich tracts occupy residues 551 to 560 (LPDHSNSHGE) and 699 to 713 (KSENKENESVEKRPS). Positions 723-737 (SSSSTSGFGAPSASG) are enriched in low complexity. Residues 738-770 (AGDGGGEEGGGGDGGGGGGGGDGGGGGGGGGGP) show a composition bias toward gly residues. Over residues 772–783 (EKNEKNQEKDDN) the composition is skewed to basic and acidic residues. Low complexity predominate over residues 1038-1055 (SQSAASDTSSQSEQDTSE). A compositionally biased stretch (basic and acidic residues) spans 1418 to 1429 (IKSDAGAEEKKV). 2 consecutive transmembrane segments (helical) span residues 2336-2356 (PFVLQLFASVAPLLEFPDAAN) and 2466-2486 (IAATAALATSLQALLYSVEVL). Positions 2493 to 2515 (PQMSRSDQGHKGTTTANHTMSSG) are disordered. 2 consecutive transmembrane segments (helical) span residues 2853-2873 (GLAESTSQAAYLALKVILVCF) and 2899-2919 (LALWDFLDFIVRTRIPIFVLL). Over residues 3010–3032 (NTGTGTVWEQDSEPSQQASQDTL) the composition is skewed to polar residues. Residues 3010–3052 (NTGTGTVWEQDSEPSQQASQDTLSRTDEEDEENDSVSMPSVVS) form a disordered region. Position 3110 is a phosphoserine (serine 3110). Disordered stretches follow at residues 3122-3222 (LQQP…VLTS), 3236-3271 (PKQSEPLLAEEGEKKEDEEIQGATAHCPLSTQLSDP), and 3296-3326 (NGTENPLLSSQFTFTPPELGDTDSALDESHV). Residues 3127 to 3136 (GRKRGLRQLR) are compositionally biased toward basic residues. Residues 3157-3168 (LSTTRRSIQPKT) are compositionally biased toward polar residues. A compositionally biased stretch (polar residues) spans 3298–3309 (TENPLLSSQFTF). Residues 3315-3326 (GDTDSALDESHV) show a composition bias toward acidic residues.

The protein belongs to the unc-80 family. In terms of assembly, NALCN complex consists of NALCN and auxiliary subunits, UNC79, UNC80 and NACL1. These auxiliary subunits are essential for the NALCN complex function. Interacts (via N-terminus half) with NALCN; this interaction facilitates NALCN surface localization. Interacts (via C-terminus) with UNC79. UNC80 bridges NALCN to UNC79. Phosphorylated on tyrosine residues. Expressed almost exclusively in the brain. Expressed in hippocampus and ventral tegmental area neurons.

It localises to the cell membrane. The protein localises to the cell projection. It is found in the dendrite. Auxiliary subunit of the NALCN sodium channel complex. The NALCN sodium channel complex is a voltage-gated ion channel responsible for the resting Na(+) permeability that controls neuronal excitability. This complex is activated by neuropeptides substance P, neurotensin. In addition, the channel is inhibited by extracellular Ca(2+) through the Ca(2+)-sensing receptor. UNC80 is essential for NALCN sensitivity to extracellular calcium. This is Protein unc-80 homolog (Unc80) from Mus musculus (Mouse).